The following is a 39-amino-acid chain: Large ribosomal subunit protein bL36 (39 aa).

Belongs to the bacterial ribosomal protein bL36 family.

The protein is Large ribosomal subunit protein bL36 of Levilactobacillus brevis (strain ATCC 367 / BCRC 12310 / CIP 105137 / JCM 1170 / LMG 11437 / NCIMB 947 / NCTC 947) (Lactobacillus brevis).